Consider the following 468-residue polypeptide: UDP-N-acetylmuramate--L-alanine ligase (468 aa).

114-120 (GTHGKTT) is a binding site for ATP.

This sequence belongs to the MurCDEF family.

It localises to the cytoplasm. The enzyme catalyses UDP-N-acetyl-alpha-D-muramate + L-alanine + ATP = UDP-N-acetyl-alpha-D-muramoyl-L-alanine + ADP + phosphate + H(+). Its pathway is cell wall biogenesis; peptidoglycan biosynthesis. In terms of biological role, cell wall formation. This chain is UDP-N-acetylmuramate--L-alanine ligase, found in Methylobacterium radiotolerans (strain ATCC 27329 / DSM 1819 / JCM 2831 / NBRC 15690 / NCIMB 10815 / 0-1).